The following is a 298-amino-acid chain: 2-dehydro-3-deoxy-D-arabinonate dehydratase (298 aa).

I86 serves as a coordination point for substrate. Residues E148, E150, and D169 each coordinate Mg(2+). Positions 187 and 261 each coordinate substrate.

Belongs to the FAH family. As to quaternary structure, homotetramer. Mg(2+) serves as cofactor. The cofactor is Ca(2+).

The catalysed reaction is 2-dehydro-3-deoxy-D-arabinonate = 2,5-dioxopentanoate + H2O. In terms of biological role, participates in a pentose oxidation pathway that converts D-arabinonate to 2-oxoglutarate. The chain is 2-dehydro-3-deoxy-D-arabinonate dehydratase from Saccharolobus solfataricus (strain ATCC 35092 / DSM 1617 / JCM 11322 / P2) (Sulfolobus solfataricus).